The following is a 116-amino-acid chain: RutC family protein HI_1627 (116 aa).

The protein belongs to the RutC family.

The protein is RutC family protein HI_1627 of Haemophilus influenzae (strain ATCC 51907 / DSM 11121 / KW20 / Rd).